The chain runs to 440 residues: MKVHLTSLGCAKNQVDSELMLGAFAAEGLTVCDDPAGADVLVVNTCAFIEDAVNEAVDTILALARYKSEGSCRRLIVCGCLPERFGEELAGALPEADFFFGTGAYHRVIEAVAGKESTLSRCTLPPPDAVPMQAAADRRICATPHTVYVKIAEGCDRRCTYCIIPRLRGRQRSRPPADIVVEARGLVAAGAKELVLVAQETTAYGADLSPPVSLASLLMALSDAVGDIWVRVLYMHPDTMDPDLIRVMTERDNLCSYFDVPVQHASDRVLKRMGRRHTAADLHRLFDDIRRADPDAVLRTTVLVGFPGEKPADFEKLLDFITGVAFDHLGAFIYSDDEALSSHGLDGHVSSKTARHRYDRVMTAQIDISSRRLAKRVGSREPVLVEEKAEDGLFFGRAWFQAPEVDGDVCFSGAGDYAPGDRVSVRITGASAYDLTGEAQ.

In terms of domain architecture, MTTase N-terminal spans 1–117 (MKVHLTSLGC…VIEAVAGKES (117 aa)). [4Fe-4S] cluster-binding residues include cysteine 10, cysteine 46, cysteine 80, cysteine 155, cysteine 159, and cysteine 162. Residues 141 to 371 (CATPHTVYVK…MTAQIDISSR (231 aa)) enclose the Radical SAM core domain. A TRAM domain is found at 374–440 (AKRVGSREPV…SAYDLTGEAQ (67 aa)).

This sequence belongs to the methylthiotransferase family. RimO subfamily. [4Fe-4S] cluster is required as a cofactor.

It localises to the cytoplasm. The catalysed reaction is L-aspartate(89)-[ribosomal protein uS12]-hydrogen + (sulfur carrier)-SH + AH2 + 2 S-adenosyl-L-methionine = 3-methylsulfanyl-L-aspartate(89)-[ribosomal protein uS12]-hydrogen + (sulfur carrier)-H + 5'-deoxyadenosine + L-methionine + A + S-adenosyl-L-homocysteine + 2 H(+). Functionally, catalyzes the methylthiolation of an aspartic acid residue of ribosomal protein uS12. In Desulfosudis oleivorans (strain DSM 6200 / JCM 39069 / Hxd3) (Desulfococcus oleovorans), this protein is Ribosomal protein uS12 methylthiotransferase RimO.